A 218-amino-acid polypeptide reads, in one-letter code: MDKKELAKMIDHTLLKPEANYEQIVKLCKEALEYGFASVCINPCYVNAAYQLLKGSDVKVCTVVGFPLGAATSETKTFEAVQAVNRGASEIDMVINVGYLKSGNHDYVEEDIKTLVNKINGRALVKVIIETCLLNDEEKIIACKLAKKAGAHFVKTSTGFNMSGATSEDVALMYDAVSPNLKVKASGGIRTYEDAIKMINAGASRIGASSSIKIINKK.

The active-site Proton donor/acceptor is Asp92. Lys155 functions as the Schiff-base intermediate with acetaldehyde in the catalytic mechanism. Lys184 acts as the Proton donor/acceptor in catalysis.

The protein belongs to the DeoC/FbaB aldolase family. DeoC type 1 subfamily.

It is found in the cytoplasm. It carries out the reaction 2-deoxy-D-ribose 5-phosphate = D-glyceraldehyde 3-phosphate + acetaldehyde. It functions in the pathway carbohydrate degradation; 2-deoxy-D-ribose 1-phosphate degradation; D-glyceraldehyde 3-phosphate and acetaldehyde from 2-deoxy-alpha-D-ribose 1-phosphate: step 2/2. Functionally, catalyzes a reversible aldol reaction between acetaldehyde and D-glyceraldehyde 3-phosphate to generate 2-deoxy-D-ribose 5-phosphate. The polypeptide is Deoxyribose-phosphate aldolase (Clostridium kluyveri (strain NBRC 12016)).